Consider the following 2587-residue polypeptide: Protein KINKY POLLEN (2587 aa).

Residues 1–27 (MAAFLVMFIFTIALFVALLWVFFKSLP) form the signal peptide. Asn-71 carries N-linked (GlcNAc...) asparagine glycosylation. Positions 103 to 124 (PSHSSKGPRKPKTRKSSSGGKG) are disordered. Positions 108 to 117 (KGPRKPKTRK) are enriched in basic residues. Residues Asn-262, Asn-281, and Asn-485 are each glycosylated (N-linked (GlcNAc...) asparagine). The disordered stretch occupies residues 270–290 (SKGEVIDSSSGNTTSEKPPKQ). Polar residues predominate over residues 276–285 (DSSSGNTTSE). The interval 589-611 (GSSSKNKQEKGAHRSKPPSGRGT) is disordered. A coiled-coil region spans residues 691 to 716 (TLNKEIQSTQVELETAKAIYQEFLEE). A disordered region spans residues 784–814 (QHGNRNPEEASTVTGDKQKEEPTTTPNSLDK). Asn-1155, Asn-1250, Asn-1281, and Asn-1486 each carry an N-linked (GlcNAc...) asparagine glycan. 3 disordered regions span residues 1571–1608 (HCSK…KHPD), 1646–1673 (VDAR…DGYN), and 1729–1797 (EGNQ…PEEE). Over residues 1576–1590 (AQMSRTSSLSGSTDR) the composition is skewed to polar residues. Residue Asn-1595 is glycosylated (N-linked (GlcNAc...) asparagine). Basic and acidic residues predominate over residues 1646-1666 (VDARSTKEKQSEPEENSHSDP). The segment covering 1746–1760 (KQPSTGSGNLASQSK) has biased composition (polar residues). Asn-1861, Asn-1951, Asn-1981, Asn-2036, and Asn-2278 each carry an N-linked (GlcNAc...) asparagine glycan. Residues 2006 to 2036 (IEEVELAKIELEAKERDRMMLLDDIRKLTQN) adopt a coiled-coil conformation. The span at 2274–2287 (QGSKNQSLKSSTIR) shows a compositional bias: polar residues. Disordered regions lie at residues 2274–2299 (QGSK…TSSF), 2319–2360 (SMEH…KKSR), and 2442–2469 (KDDI…RPGD). Basic and acidic residues-rich tracts occupy residues 2289 to 2299 (SGRELRRTSSF), 2322 to 2336 (HQGE…DSKT), 2343 to 2359 (SVHE…DKKS), and 2442 to 2458 (KDDI…RTDQ). Residues Asn-2513 and Asn-2544 are each glycosylated (N-linked (GlcNAc...) asparagine). Positions 2533–2587 (IRRHSKKFQNQNTTKGSKKTQLSPTLSPPKEEDQYESDSSSGSSAYEEFLDQNQI) are disordered. Polar residues predominate over residues 2540–2557 (FQNQNTTKGSKKTQLSPT). Positions 2569–2579 (SDSSSGSSAYE) are enriched in low complexity.

This sequence belongs to the SABRE family. As to expression, mostly expressed in pollen and roots, especially in tip-growing cells, but also present in seedlings, stems, leaves, buds, flowers, siliques and seeds.

The protein resides in the secreted. It localises to the golgi apparatus. May be involved in membrane trafficking. Required for tip growth in pollen tubes and root hairs. This Arabidopsis thaliana (Mouse-ear cress) protein is Protein KINKY POLLEN.